Reading from the N-terminus, the 146-residue chain is Large ribosomal subunit protein bL19 (146 aa).

Belongs to the bacterial ribosomal protein bL19 family.

In terms of biological role, this protein is located at the 30S-50S ribosomal subunit interface and may play a role in the structure and function of the aminoacyl-tRNA binding site. This Bartonella henselae (strain ATCC 49882 / DSM 28221 / CCUG 30454 / Houston 1) (Rochalimaea henselae) protein is Large ribosomal subunit protein bL19.